We begin with the raw amino-acid sequence, 365 residues long: MRPTEINPADYEQQLAQKVNSVQQAFKTFSMPALEAFSSAPLNYRMRAEFRMWHDGDNLDHVMFDQSTKQKYAVNQFPPASIVINEVMMKLLSLVKKNEVLRRKLFQIDYLSTLTNEILVTLVYHKPLEDEWLKEAKALRALLRDEFKIDIIGRAKKQKVLLDKDYVIETLPVNDRLYTFKQIENSFTQPNAGVNSKMLEWALDVTQDCQGDLLELYCGAGNFSLPLAQNFRQVLATEISKSSVAAAQDNIRLNNIENVTILRMSSEEFVQALNNERSFRRLEGINLQDYDCQTVLVDPPRSGLDDDTLDMIKEYQNIVYISCNPETLNNNLAVLSETHNVVRFALFDQFPYTHHVESGVYLQKR.

S-adenosyl-L-methionine contacts are provided by Q189, Y217, N222, E238, and D298. C323 functions as the Nucleophile in the catalytic mechanism. E357 serves as the catalytic Proton acceptor.

It belongs to the class I-like SAM-binding methyltransferase superfamily. RNA M5U methyltransferase family. TrmA subfamily.

The catalysed reaction is uridine(54) in tRNA + S-adenosyl-L-methionine = 5-methyluridine(54) in tRNA + S-adenosyl-L-homocysteine + H(+). It catalyses the reaction uridine(341) in tmRNA + S-adenosyl-L-methionine = 5-methyluridine(341) in tmRNA + S-adenosyl-L-homocysteine + H(+). In terms of biological role, dual-specificity methyltransferase that catalyzes the formation of 5-methyluridine at position 54 (m5U54) in all tRNAs, and that of position 341 (m5U341) in tmRNA (transfer-mRNA). The chain is tRNA/tmRNA (uracil-C(5))-methyltransferase from Pseudoalteromonas atlantica (strain T6c / ATCC BAA-1087).